The following is a 278-amino-acid chain: Energy-coupling factor transporter ATP-binding protein EcfA (278 aa).

Residues 4-239 (LETRDLKYSY…SETVRSANLR (236 aa)) form the ABC transporter domain. 37-44 (GPNGAGKS) is an ATP binding site.

This sequence belongs to the ABC transporter superfamily. Energy-coupling factor EcfA family. In terms of assembly, forms a stable energy-coupling factor (ECF) transporter complex composed of 2 membrane-embedded substrate-binding proteins (S component), 2 ATP-binding proteins (A component) and 2 transmembrane proteins (T component).

It localises to the cell membrane. In terms of biological role, ATP-binding (A) component of a common energy-coupling factor (ECF) ABC-transporter complex. Unlike classic ABC transporters this ECF transporter provides the energy necessary to transport a number of different substrates. The chain is Energy-coupling factor transporter ATP-binding protein EcfA from Methanococcus maripaludis (strain DSM 14266 / JCM 13030 / NBRC 101832 / S2 / LL).